A 252-amino-acid chain; its full sequence is Imidazole glycerol phosphate synthase subunit HisF (252 aa).

Residues D11 and D130 contribute to the active site.

This sequence belongs to the HisA/HisF family. Heterodimer of HisH and HisF.

The protein resides in the cytoplasm. The catalysed reaction is 5-[(5-phospho-1-deoxy-D-ribulos-1-ylimino)methylamino]-1-(5-phospho-beta-D-ribosyl)imidazole-4-carboxamide + L-glutamine = D-erythro-1-(imidazol-4-yl)glycerol 3-phosphate + 5-amino-1-(5-phospho-beta-D-ribosyl)imidazole-4-carboxamide + L-glutamate + H(+). It participates in amino-acid biosynthesis; L-histidine biosynthesis; L-histidine from 5-phospho-alpha-D-ribose 1-diphosphate: step 5/9. IGPS catalyzes the conversion of PRFAR and glutamine to IGP, AICAR and glutamate. The HisF subunit catalyzes the cyclization activity that produces IGP and AICAR from PRFAR using the ammonia provided by the HisH subunit. The protein is Imidazole glycerol phosphate synthase subunit HisF of Lacticaseibacillus casei (strain BL23) (Lactobacillus casei).